The chain runs to 498 residues: Putative antiporter subunit mnhD2 (498 aa).

14 helical membrane-spanning segments follow: residues 2 to 22 (LSNLLILPMLLPFLCALILVF), 32 to 52 (YLYLGTMTITTIISLMLLIYV), 78 to 98 (LSLIMVTTASFVITLIMAYGF), 108 to 128 (YHLPSFILFLSVGVIGSFLTS), 130 to 150 (LFNLYVMFEIMLLASFVLITL), 161 to 181 (IIYVVLNIIGSWLFLLGIGLL), 209 to 229 (ISLIFLVAFSAKAALVLFMWL), 240 to 260 (LAALFAALMTKVGAYALIRFF), 271 to 291 (IHPLLVTMAAITMVIGAIGVI), 308 to 328 (IGFIILGLGTNTFAGINGAIF), 330 to 350 (LVNDIVVKTLLFFIIGSLVYI), 368 to 388 (FFGVAFIIMIFAIGGVPPFSG), 403 to 423 (GNYIGLALMIITSLIAMYSLF), and 450 to 470 (GILSILVVVVIAIGIAAPVLL).

Belongs to the CPA3 antiporters (TC 2.A.63) subunit D family. In terms of assembly, may form a heterooligomeric complex that consists of seven subunits: mnhA2, mnhB2, mnhC2, mnhD2, mnhE2, mnhF2 and mnhG2.

Its subcellular location is the cell membrane. This Staphylococcus aureus (strain MRSA252) protein is Putative antiporter subunit mnhD2 (mnhD2).